A 359-amino-acid chain; its full sequence is Type-1 angiotensin II receptor (359 aa).

Topologically, residues 1-25 are extracellular; that stretch reads MILNSSTEDGIKRIQDDCPKAGRHN. An N-linked (GlcNAc...) (complex) asparagine glycan is attached at Asn4. Residues Gln15 and Asp17 each contribute to the angiotensin II site. 2 disulfides stabilise this stretch: Cys18–Cys274 and Cys101–Cys180. Residues 26–55 traverse the membrane as a helical segment; that stretch reads YIFVMIPTLYSIIFVVGIFGNSLVVIVIYF. Topologically, residues 56 to 61 are cytoplasmic; the sequence is YMKLKT. A helical membrane pass occupies residues 62 to 89; the sequence is VASVFLLNLALADLCFLLTLPLWAVYTA. The Extracellular segment spans residues 90-98; sequence MEYRWPFGN. Residues 99-125 traverse the membrane as a helical segment; it reads YLCKIASASVSFNLYASVFLLTCLSID. Residues 126-141 lie on the Cytoplasmic side of the membrane; the sequence is RYLAIVHPMKSRLRRT. The chain crosses the membrane as a helical span at residues 142 to 165; that stretch reads MLVAKVTCIIIWLLAGLASLPAII. Residues 166–190 are Extracellular-facing; the sequence is HRNVFFIENTNITVCAFHYESQNST. Position 167 (Arg167) interacts with angiotensin II. N-linked (GlcNAc...) asparagine glycosylation is present at Asn176. Angiotensin II is bound by residues Phe182, His183, and Tyr184. N-linked (GlcNAc...) asparagine glycosylation occurs at Asn188. Residues 191-216 form a helical membrane-spanning segment; that stretch reads LPIGLGLTKNILGFLFPFLIILTSYT. Lys199 contributes to the angiotensin II binding site. Topologically, residues 217-239 are cytoplasmic; sequence LIWKALKKAYEIQKNKPRNDDIF. The chain crosses the membrane as a helical span at residues 240–268; the sequence is KIIMAIVLFFFFSWIPHQIFTFLDVLIQL. Over 269 to 278 the chain is Extracellular; the sequence is GIIRDCRIAD. The helical transmembrane segment at 279–304 threads the bilayer; that stretch reads IVDTAMPITICIAYFNNCLNPLFYGF. The Cytoplasmic segment spans residues 305–359; it reads LGKKFKRYFLQLLKYIPPKAKSHSNLSTKMSTLSYRPSDNVSSSTKKPAPCFEVE. Residues 335 to 350 show a composition bias toward polar residues; sequence STLSYRPSDNVSSSTK. Residues 335–359 form a disordered region; the sequence is STLSYRPSDNVSSSTKKPAPCFEVE. A lipid anchor (S-palmitoyl cysteine) is attached at Cys355.

It belongs to the G-protein coupled receptor 1 family. In terms of assembly, interacts with MAS1. Interacts with ARRB1. Interacts with FLNA (via filamin repeat 21); increases PKA-mediated phosphorylation of FLNA. In terms of processing, C-terminal Ser or Thr residues may be phosphorylated. As to expression, liver, lung, adrenal and adrenocortical adenomas.

It localises to the cell membrane. With respect to regulation, strongly inhibited by anti-hypertensive drugs losartan, candesartan, valsartan, irbesartan, telmisartan, eprosartan, olmesartan and azilsartan, most of which share a common biphenyl-tetrazole scaffold. Functionally, receptor for angiotensin II, a vasoconstricting peptide, which acts as a key regulator of blood pressure and sodium retention by the kidney. The activated receptor in turn couples to G-alpha proteins G(q) (GNAQ, GNA11, GNA14 or GNA15) and thus activates phospholipase C and increases the cytosolic Ca(2+) concentrations, which in turn triggers cellular responses such as stimulation of protein kinase C. (Microbial infection) During SARS coronavirus-2/SARS-CoV-2 infection, it is able to recognize and internalize the complex formed by secreted ACE2 and SARS-CoV-2 spike protein through DNM2/dynamin 2-dependent endocytosis. The protein is Type-1 angiotensin II receptor of Homo sapiens (Human).